Here is a 189-residue protein sequence, read N- to C-terminus: 3-isopropylmalate dehydratase small subunit (189 aa).

Belongs to the LeuD family. LeuD type 1 subfamily. In terms of assembly, heterodimer of LeuC and LeuD.

The enzyme catalyses (2R,3S)-3-isopropylmalate = (2S)-2-isopropylmalate. Its pathway is amino-acid biosynthesis; L-leucine biosynthesis; L-leucine from 3-methyl-2-oxobutanoate: step 2/4. Catalyzes the isomerization between 2-isopropylmalate and 3-isopropylmalate, via the formation of 2-isopropylmaleate. This Francisella tularensis subsp. holarctica (strain FTNF002-00 / FTA) protein is 3-isopropylmalate dehydratase small subunit.